The sequence spans 3788 residues: Lysosomal-trafficking regulator (3788 aa).

2 disordered regions span residues 148 to 180 (KSTH…TVVS) and 198 to 217 (EGHL…VLSD). Ser-164 bears the Phosphoserine mark. Position 165 is a phosphothreonine (Thr-165). At Ser-166 the chain carries Phosphoserine. Residues 662–700 (GPTSGLPSPSYRFQGILPSSGSEDLLWKWDALEAYQSFV) form a WD 1 repeat. Disordered regions lie at residues 1169–1196 (LGPG…FSEE), 1213–1240 (GYEA…EAEG), and 1482–1519 (ESAA…TESI). A compositionally biased stretch (acidic residues) spans 1213 to 1232 (GYEADSESNPEDVDTQDDGV). A phosphoserine mark is found at Ser-1503 and Ser-1504. One copy of the WD 2 repeat lies at 1576-1620 (SQENIFFPSKWQHLVLTYIQHPQGKKNVHGEISIWVSGQRKTDVI). Residues Ser-2099, Ser-2118, Ser-2203, Ser-2207, and Ser-2254 each carry the phosphoserine modification. The disordered stretch occupies residues 2177 to 2221 (ANGVSRGSPRFPRARVDHKDVGTEPRSDDDSPGDESYPRRPDNLK). The segment covering 2190-2205 (ARVDHKDVGTEPRSDD) has biased composition (basic and acidic residues). Disordered stretches follow at residues 2556 to 2581 (HDSE…SIAG) and 2659 to 2681 (NTSQ…HHEQ). Positions 2566–2578 (SAHRHSVPPKRRS) are enriched in basic residues. Polar residues predominate over residues 2659 to 2671 (NTSQSKTSVSQTE). In terms of domain architecture, BEACH-type PH spans 2996–3102 (AASESIRVNR…VRDDVYQSIL (107 aa)). Residues 3126 to 3409 (QITNFEYLTH…QLFHTAHASR (284 aa)) enclose the BEACH domain. WD repeat units follow at residues 3550–3589 (SQQH…STPS), 3601–3640 (GHTE…YVQS), 3643–3686 (GHKS…VGHV), 3687–3731 (HCRE…PVRE), and 3736–3775 (KSNK…RVKL).

Interacts with CPAP, LIP8 and ZNF521. Expressed in the heart, lung, liver, spleen, brain and in different immune cell types (purified B and T lymphocytes, bone marrow-derived macrophages and dendritic cells).

The protein resides in the cytoplasm. In terms of biological role, adapter protein that regulates and/or fission of intracellular vesicles such as lysosomes. Might regulate trafficking of effectors involved in exocytosis. In cytotoxic T-cells and natural killer (NK) cells, has role in the regulation of size, number and exocytosis of lytic granules. In macrophages and dendritic cells, regulates phagosome maturation by controlling the conversion of early phagosomal compartments into late phagosomes. In macrophages and dendritic cells, specifically involved in TLR3- and TLR4-induced production of pro-inflammatory cytokines by regulating the endosomal TLR3- TICAM1/TRIF and TLR4- TICAM1/TRIF signaling pathways. The chain is Lysosomal-trafficking regulator (Lyst) from Mus musculus (Mouse).